Here is a 435-residue protein sequence, read N- to C-terminus: Exopolysaccharide production protein ExoQ (435 aa).

10 helical membrane passes run 11–31 (PGANEVYGIFALALSLFVFAY), 35–55 (FGQVSILAYYGLWLPLVLVDY), 65–85 (YLWIFAFTIFACITIFWSAAP), 117–137 (GMIAGAAIVLLYSLLFGTYHY), 156–176 (LGFYASLGIYFAFAAVFVLGE), 178–198 (GLWMGAAGGAGLLAAYCLLTS), 203–223 (SVLTTAAVIGLCLGMRAITAL), 230–250 (LLFIAASVFGGVAAVAMIYAG), 325–345 (VVETGLIGLILLTMVLVTAFF), and 361–381 (MVLFGVGALLFVRAFVEIDIL).

It localises to the cell membrane. The protein operates within glycan metabolism; exopolysaccharide biosynthesis. Involved in the production of exopolysaccharide. This is Exopolysaccharide production protein ExoQ (exoQ) from Rhizobium meliloti (strain 1021) (Ensifer meliloti).